The chain runs to 398 residues: NADH-quinone oxidoreductase subunit D (398 aa).

It belongs to the complex I 49 kDa subunit family. In terms of assembly, NDH-1 is composed of 14 different subunits. Subunits NuoB, C, D, E, F, and G constitute the peripheral sector of the complex.

Its subcellular location is the cell inner membrane. It carries out the reaction a quinone + NADH + 5 H(+)(in) = a quinol + NAD(+) + 4 H(+)(out). NDH-1 shuttles electrons from NADH, via FMN and iron-sulfur (Fe-S) centers, to quinones in the respiratory chain. The immediate electron acceptor for the enzyme in this species is believed to be ubiquinone. Couples the redox reaction to proton translocation (for every two electrons transferred, four hydrogen ions are translocated across the cytoplasmic membrane), and thus conserves the redox energy in a proton gradient. This Anaplasma marginale (strain St. Maries) protein is NADH-quinone oxidoreductase subunit D.